The chain runs to 248 residues: Small ribosomal subunit protein uS3 (248 aa).

Residues 39–107 (IRQMLLKQLK…EVFINIVEIR (69 aa)) form the KH type-2 domain. The disordered stretch occupies residues 214–248 (AVDKRMTAESEGPSSGRPPRRDRDRDRDRDRDSAA). Basic and acidic residues predominate over residues 232 to 248 (PRRDRDRDRDRDRDSAA).

Belongs to the universal ribosomal protein uS3 family. As to quaternary structure, part of the 30S ribosomal subunit. Forms a tight complex with proteins S10 and S14.

Binds the lower part of the 30S subunit head. Binds mRNA in the 70S ribosome, positioning it for translation. The protein is Small ribosomal subunit protein uS3 of Azorhizobium caulinodans (strain ATCC 43989 / DSM 5975 / JCM 20966 / LMG 6465 / NBRC 14845 / NCIMB 13405 / ORS 571).